The following is a 355-amino-acid chain: MKIAVLPGDGIGPEIVTEAVKVLNALDEKFELEQAPVGGAGYEARGHPLPDATLKLAKEADAILFGAVGDWKYDSLERALRPEQAILGLRKHLELFANFRPAICYPQLVDASPLKPELVAGLDILIVRELNGDIYFGQPRGVRAAPDGPFAGEREGFDTMRYSEPEVRRIAHVAFQAAQKRAKKLLSVDKSNVLETSQFWRDIMIDVSKEYADVELSHMYVDNAAMQLAKAPKQFDVIVTGNMFGDILSDEASMLTGSIGMLPSASLDKNNKGLYEPSHGSAPDIAGKGIANPLATILSAAMLLRYSLNRAEQADRIERAVKTVLEQGYRTGDIATPGCKQVGTAAMGDAVVAAL.

R90, R100, R128, and D222 together coordinate substrate. D222, D246, and D250 together coordinate Mg(2+). 280 to 292 (GSAPDIAGKGIAN) lines the NAD(+) pocket.

The protein belongs to the isocitrate and isopropylmalate dehydrogenases family. LeuB type 1 subfamily. In terms of assembly, homodimer. It depends on Mg(2+) as a cofactor. Mn(2+) serves as cofactor.

It is found in the cytoplasm. The enzyme catalyses (2R,3S)-3-isopropylmalate + NAD(+) = 4-methyl-2-oxopentanoate + CO2 + NADH. It participates in amino-acid biosynthesis; L-leucine biosynthesis; L-leucine from 3-methyl-2-oxobutanoate: step 3/4. Functionally, catalyzes the oxidation of 3-carboxy-2-hydroxy-4-methylpentanoate (3-isopropylmalate) to 3-carboxy-4-methyl-2-oxopentanoate. The product decarboxylates to 4-methyl-2 oxopentanoate. The sequence is that of 3-isopropylmalate dehydrogenase from Burkholderia multivorans (strain ATCC 17616 / 249).